A 522-amino-acid polypeptide reads, in one-letter code: MTKLTDEVKKRRTFAIISHPDAGKTTITEQMLLFGGVIRSAGTVKARKSGHYATSDWMAIEKKRGISVTSSVMQFEYQGKRINILDTPGHQDFSEDTYRTLMAVDAAVMVIDSAKGIEPQTKKLFKVVKKRGIPIFTFMNKLDRDGREPLDLIAELEDLLGIEGVAMNWPIGMGKQLKGLYDIANNRVELYRKDDDDRYLPLDKNGKLAEDEPLAQDSLYQSTLDDIDLLKEAGNTFDKEKILKGDQTPVFFGSALTNFGVETFLDSFVNLAPAPQEHIVNGDEKLAADDPEFSGFVFKIQANMNPNHRDRIAFVRIGSGEFKKGIDVTLARTGKPVRLNNATEFMSSERVQVSDAVAGDIVGLYDTGNFQIGDSIYAGKKKIVYPALPQFTPEIFMRVTAKNVMKQKSFHKGMNQLVQEGAIQLYRGYSTDDYILGAVGQLQFEVFSFRMKNEYNSEVELHTLGNRVARWINPDQLDPKMSSSRNLLVKDRDGEPLFLFENAFAERWFKDKYPDVELTSRL.

The tr-type G domain maps to 9-276 (KKRRTFAIIS…SFVNLAPAPQ (268 aa)). Residues 18–25 (SHPDAGKT), 86–90 (DTPGH), and 140–143 (NKLD) contribute to the GTP site.

It belongs to the TRAFAC class translation factor GTPase superfamily. Classic translation factor GTPase family. PrfC subfamily.

It localises to the cytoplasm. In terms of biological role, increases the formation of ribosomal termination complexes and stimulates activities of RF-1 and RF-2. It binds guanine nucleotides and has strong preference for UGA stop codons. It may interact directly with the ribosome. The stimulation of RF-1 and RF-2 is significantly reduced by GTP and GDP, but not by GMP. In Lactobacillus gasseri (strain ATCC 33323 / DSM 20243 / BCRC 14619 / CIP 102991 / JCM 1131 / KCTC 3163 / NCIMB 11718 / NCTC 13722 / AM63), this protein is Peptide chain release factor 3.